The chain runs to 138 residues: Basic phospholipase A2 trimucrotoxin (138 aa).

Positions 1-16 (MRTLWIVAVLLLGVEG) are cleaved as a signal peptide. 7 disulfides stabilise this stretch: C42–C131, C44–C60, C59–C111, C65–C138, C66–C104, C73–C97, and C91–C102. 3 residues coordinate Ca(2+): Y43, G45, and G47. The active site involves H63. D64 serves as a coordination point for Ca(2+). D105 is a catalytic residue.

The protein belongs to the phospholipase A2 family. Group II subfamily. D49 sub-subfamily. In terms of assembly, homodimer. The cofactor is Ca(2+). In terms of tissue distribution, expressed by the venom gland.

The protein resides in the secreted. The enzyme catalyses a 1,2-diacyl-sn-glycero-3-phosphocholine + H2O = a 1-acyl-sn-glycero-3-phosphocholine + a fatty acid + H(+). In terms of biological role, snake venom phospholipase A2 (PLA2) that displays edema-inducing activities, as well as presynaptic neurotoxicity and low myotoxicity. PLA2 catalyzes the calcium-dependent hydrolysis of the 2-acyl groups in 3-sn-phosphoglycerides. In Protobothrops mucrosquamatus (Taiwan habu), this protein is Basic phospholipase A2 trimucrotoxin.